The primary structure comprises 562 residues: Arginine--tRNA ligase (562 aa).

The 'HIGH' region signature appears at 136-146 (ANPTGPMHMGN).

Belongs to the class-I aminoacyl-tRNA synthetase family. As to quaternary structure, monomer.

Its subcellular location is the cytoplasm. It catalyses the reaction tRNA(Arg) + L-arginine + ATP = L-arginyl-tRNA(Arg) + AMP + diphosphate. The chain is Arginine--tRNA ligase (argS) from Caldanaerobacter subterraneus subsp. tengcongensis (strain DSM 15242 / JCM 11007 / NBRC 100824 / MB4) (Thermoanaerobacter tengcongensis).